The sequence spans 364 residues: 3-dehydroquinate synthase (364 aa).

Residues 75–80, 109–113, 133–134, lysine 146, lysine 155, and 173–176 each bind NAD(+); these read DGEQYK, GVIGD, TT, and TLDT. Residues glutamate 188, histidine 251, and histidine 268 each coordinate Zn(2+).

Belongs to the sugar phosphate cyclases superfamily. Dehydroquinate synthase family. It depends on Co(2+) as a cofactor. Zn(2+) serves as cofactor. Requires NAD(+) as cofactor.

The protein localises to the cytoplasm. It catalyses the reaction 7-phospho-2-dehydro-3-deoxy-D-arabino-heptonate = 3-dehydroquinate + phosphate. Its pathway is metabolic intermediate biosynthesis; chorismate biosynthesis; chorismate from D-erythrose 4-phosphate and phosphoenolpyruvate: step 2/7. Its function is as follows. Catalyzes the conversion of 3-deoxy-D-arabino-heptulosonate 7-phosphate (DAHP) to dehydroquinate (DHQ). The protein is 3-dehydroquinate synthase of Dechloromonas aromatica (strain RCB).